Reading from the N-terminus, the 160-residue chain is Major pollen allergen Bet v 1-A (160 aa).

Lys55, Tyr82, Tyr84, and Asn101 together coordinate brassinolide.

It belongs to the BetVI family.

Its subcellular location is the cytoplasm. Functionally, may be a general steroid carrier protein. The chain is Major pollen allergen Bet v 1-A (BETVIA) from Betula pendula (European white birch).